The following is a 670-amino-acid chain: DNA ligase (670 aa).

Residues aspartate 32–aspartate 36, serine 81–leucine 82, and glutamate 113 contribute to the NAD(+) site. Lysine 115 (N6-AMP-lysine intermediate) is an active-site residue. Residues arginine 136, glutamate 173, lysine 290, and lysine 314 each coordinate NAD(+). Zn(2+) contacts are provided by cysteine 408, cysteine 411, cysteine 426, and cysteine 432. The region spanning glutamate 592–glutamate 670 is the BRCT domain.

It belongs to the NAD-dependent DNA ligase family. LigA subfamily. Requires Mg(2+) as cofactor. Mn(2+) is required as a cofactor.

It catalyses the reaction NAD(+) + (deoxyribonucleotide)n-3'-hydroxyl + 5'-phospho-(deoxyribonucleotide)m = (deoxyribonucleotide)n+m + AMP + beta-nicotinamide D-nucleotide.. In terms of biological role, DNA ligase that catalyzes the formation of phosphodiester linkages between 5'-phosphoryl and 3'-hydroxyl groups in double-stranded DNA using NAD as a coenzyme and as the energy source for the reaction. It is essential for DNA replication and repair of damaged DNA. The polypeptide is DNA ligase (Yersinia pestis bv. Antiqua (strain Antiqua)).